Here is a 149-residue protein sequence, read N- to C-terminus: Macrodomain Ter protein (149 aa).

This sequence belongs to the MatP family. In terms of assembly, homodimer.

The protein localises to the cytoplasm. Required for spatial organization of the terminus region of the chromosome (Ter macrodomain) during the cell cycle. Prevents early segregation of duplicated Ter macrodomains during cell division. Binds specifically to matS, which is a 13 bp signature motif repeated within the Ter macrodomain. This chain is Macrodomain Ter protein, found in Vibrio vulnificus (strain YJ016).